The primary structure comprises 475 residues: Probable UDP-N-acetylglucosamine pyrophosphorylase (475 aa).

Positions 103 to 106 match the Substrate binding motif; sequence LAGG. Residues 103–106, Lys117, Gln194, and Gly220 each bind UTP; that span reads LAGG. Asn221 contributes to the substrate binding site. Asp251 contributes to the UTP binding site. The Substrate binding signature appears at 301 to 302; the sequence is EY. Lys378 contributes to the UTP binding site. The residue at position 405 (Ser405) is a Phosphoserine. Residue Lys410 coordinates substrate.

The protein belongs to the UDPGP type 1 family.

The protein localises to the cytoplasm. It localises to the nucleus. It catalyses the reaction N-acetyl-alpha-D-glucosamine 1-phosphate + UTP + H(+) = UDP-N-acetyl-alpha-D-glucosamine + diphosphate. It participates in nucleotide-sugar biosynthesis; UDP-N-acetyl-alpha-D-glucosamine biosynthesis; UDP-N-acetyl-alpha-D-glucosamine from N-acetyl-alpha-D-glucosamine 1-phosphate: step 1/1. This Schizosaccharomyces pombe (strain 972 / ATCC 24843) (Fission yeast) protein is Probable UDP-N-acetylglucosamine pyrophosphorylase (uap1).